The following is a 101-amino-acid chain: MPFSHTKIVGPAGRYGARYGMGLRRKITAIEIKQRGKHRCPSCRSLVRLKRLAFGIWQCPKCGFTFAGGAWVPQTVMGKTLTPEELKEVEIQKARWRETGK.

The C4-type zinc finger occupies Cys40 to Cys62.

This sequence belongs to the eukaryotic ribosomal protein eL43 family. The cofactor is Zn(2+).

The polypeptide is Large ribosomal subunit protein eL43 (Pyrobaculum islandicum (strain DSM 4184 / JCM 9189 / GEO3)).